The primary structure comprises 204 residues: Crossover junction endodeoxyribonuclease RuvC (204 aa).

Catalysis depends on residues Asp-7, Glu-68, and Asp-141. Mg(2+) is bound by residues Asp-7, Glu-68, and Asp-141. Residues 164–204 (QAVAAHRTSGASRTPGAAGTPGPSRTPGAPGTSRTLKGRTA) form a disordered region.

Belongs to the RuvC family. Homodimer which binds Holliday junction (HJ) DNA. The HJ becomes 2-fold symmetrical on binding to RuvC with unstacked arms; it has a different conformation from HJ DNA in complex with RuvA. In the full resolvosome a probable DNA-RuvA(4)-RuvB(12)-RuvC(2) complex forms which resolves the HJ. Mg(2+) is required as a cofactor.

It is found in the cytoplasm. It carries out the reaction Endonucleolytic cleavage at a junction such as a reciprocal single-stranded crossover between two homologous DNA duplexes (Holliday junction).. In terms of biological role, the RuvA-RuvB-RuvC complex processes Holliday junction (HJ) DNA during genetic recombination and DNA repair. Endonuclease that resolves HJ intermediates. Cleaves cruciform DNA by making single-stranded nicks across the HJ at symmetrical positions within the homologous arms, yielding a 5'-phosphate and a 3'-hydroxyl group; requires a central core of homology in the junction. The consensus cleavage sequence is 5'-(A/T)TT(C/G)-3'. Cleavage occurs on the 3'-side of the TT dinucleotide at the point of strand exchange. HJ branch migration catalyzed by RuvA-RuvB allows RuvC to scan DNA until it finds its consensus sequence, where it cleaves and resolves the cruciform DNA. This chain is Crossover junction endodeoxyribonuclease RuvC, found in Streptomyces griseus subsp. griseus (strain JCM 4626 / CBS 651.72 / NBRC 13350 / KCC S-0626 / ISP 5235).